The primary structure comprises 494 residues: Fumarate hydratase, mitochondrial (494 aa).

The N-terminal 15 residues, 1 to 15 (MLRASATRFLSQAKN), are a transit peptide targeting the mitochondrion. Substrate is bound by residues 128 to 130 (SGT), 159 to 162 (HPND), 169 to 171 (SSN), and threonine 217. Catalysis depends on histidine 218, which acts as the Proton donor/acceptor. Serine 348 is a catalytic residue. Residues serine 349 and 354–356 (KVN) contribute to the substrate site.

Belongs to the class-II fumarase/aspartase family. Fumarase subfamily. In terms of assembly, homotetramer.

The protein resides in the mitochondrion matrix. The protein localises to the cytoplasm. It is found in the nucleus. It carries out the reaction (S)-malate = fumarate + H2O. The protein operates within carbohydrate metabolism; tricarboxylic acid cycle; (S)-malate from fumarate: step 1/1. Functionally, catalyzes the reversible stereospecific interconversion of fumarate to L-malate. In mitochondrion, catalyzes the hydration of fumarate to L-malate in the tricarboxylic acid (TCA) cycle to facilitate a transition step in the production of energy in the form of NADH. In cytoplasm and nucleus, involved in DNA repair in response to DNA damage: following DNA double-strand breaks (DSBs), translocates from the cytosol to the nucleus and promotes DNA repair by catalyzing the dehydration of L-malate to fumarate. The chain is Fumarate hydratase, mitochondrial from Rhizopus oryzae (Mucormycosis agent).